The following is a 268-amino-acid chain: Enoyl-[acyl-carrier-protein] reductase [NADH] (268 aa).

Residues 20–21, 64–65, and 95–96 contribute to the NAD(+) site; these read SI, DV, and IA. A substrate-binding site is contributed by Tyr-157. NAD(+) contacts are provided by Lys-164 and Ile-193.

Belongs to the short-chain dehydrogenases/reductases (SDR) family. FabI subfamily. Homodimer. Homotetramer.

The enzyme catalyses a 2,3-saturated acyl-[ACP] + NAD(+) = a (2E)-enoyl-[ACP] + NADH + H(+). It carries out the reaction a 2,3-saturated acyl-CoA + NAD(+) = a (2E)-enoyl-CoA + NADH + H(+). The protein operates within lipid metabolism; mycolic acid biosynthesis. Enoyl-ACP reductase of the type II fatty acid syntase (FAS-II) system, which is involved in the biosynthesis of mycolic acids, a major component of mycobacterial cell walls. Catalyzes the NADH-dependent reduction of the double bond of 2-trans-enoyl-[acyl-carrier protein], an essential step in the fatty acid elongation cycle of the FAS-II pathway. Shows preference for long-chain fatty acyl thioester substrates, and can also use 2-trans-enoyl-CoAs as alternative substrates. The mycobacterial FAS-II system utilizes the products of the FAS-I system as primers to extend fatty acyl chain lengths up to C56, forming the meromycolate chain that serves as the precursor for final mycolic acids. The protein is Enoyl-[acyl-carrier-protein] reductase [NADH] of Mycobacterium avium.